We begin with the raw amino-acid sequence, 229 residues long: uncharacterized protein (229 aa).

The signal sequence occupies residues 1-17 (MKKIIALMLFLTFFAHA).

This is an uncharacterized protein from Escherichia coli O157:H7.